Here is a 226-residue protein sequence, read N- to C-terminus: uncharacterized protein (226 aa).

The N-acetyltransferase domain maps to 18-219 (LTIRNYTETD…YGVLMEWKNV (202 aa)).

The protein belongs to the acetyltransferase family.

This is an uncharacterized protein from Bacillus subtilis (strain 168).